Here is a 61-residue protein sequence, read N- to C-terminus: Small ribosomal subunit protein uS14B (61 aa).

Zn(2+)-binding residues include Cys-24, Cys-27, Cys-40, and Cys-43.

This sequence belongs to the universal ribosomal protein uS14 family. Zinc-binding uS14 subfamily. Part of the 30S ribosomal subunit. Contacts proteins S3 and S10. Zn(2+) is required as a cofactor.

Functionally, binds 16S rRNA, required for the assembly of 30S particles and may also be responsible for determining the conformation of the 16S rRNA at the A site. This is Small ribosomal subunit protein uS14B from Staphylococcus saprophyticus subsp. saprophyticus (strain ATCC 15305 / DSM 20229 / NCIMB 8711 / NCTC 7292 / S-41).